A 324-amino-acid polypeptide reads, in one-letter code: MNVLITGGAGFLGLQLARLLLQRGTLNLDGQPVAIKRLTLLDVVAPQGLDDARVRVVTGDLSDPAVLRQAIDTDTGAVFHLAAVVSGQAEADFDLGMRVNLDASRALLETCRELGHQPRVLFTSSVAVYGGQLPPVVQDDTALNPQSSYGVQKAIGELLLSDYSRRGFVDGRVLRLPTISVRPGKPNAAASSFASGIIREPLSGVAANCPVAPETPLWLLSPRAAVAALVNGIELAGERLGNRRVVNLPGLSVTAAGMIEALRRVAGNAVADRVTWEREARVENIVGTWPAAWNAERALALGFQSDASFDEVIRAYMEDAGLAK.

Positions 125, 149, and 153 each coordinate NAD(+). Y149 (proton acceptor) is an active-site residue.

The protein belongs to the NAD(P)-dependent epimerase/dehydratase family.

The enzyme catalyses D-erythronate + NAD(+) = 2-dehydro-D-erythronate + NADH + H(+). Its function is as follows. Catalyzes oxidation of D-erythronate to 2-oxo-tetronate. Can use either NAD(+) or NADP(+) as cosubstrate, with a preference for NAD(+). The chain is D-erythronate dehydrogenase from Cupriavidus necator (strain ATCC 17699 / DSM 428 / KCTC 22496 / NCIMB 10442 / H16 / Stanier 337) (Ralstonia eutropha).